The primary structure comprises 97 residues: MTASVVRIEDKLYQNRYLVDAGRPHIKVRQHQSPSPNLLALTVVCPAKCYEVNEDGQVEVIADGCMECGTCRVLCEESGDIDWSYPRGGFGVLFKFG.

Positions 56–86 (GQVEVIADGCMECGTCRVLCEESGDIDWSYP) constitute a 4Fe-4S ferredoxin-type domain.

This sequence to ferredoxins from P.putida and C.tartarivorum, ferredoxin I from A.vinelandii, ferredoxin II from D.desulfuricans.

In terms of biological role, could be a 3Fe-4S cluster-containing protein. The polypeptide is Ferredoxin-like protein (fixX) (Sinorhizobium fredii (strain NBRC 101917 / NGR234)).